A 791-amino-acid chain; its full sequence is MNNQRKKTGRPSFNMLKRARNRVSTGSQLAKRFSKGLLSGQGPMKLVMAFIAFLRFLAIPPTAGILARWSSFKKNGAIKVLRGFKKEISSMLNIMNRRKRSVTMLLMLLPTALAFHLTTRGGEPTLIVSKQERGKSLLFKTSAGVNMCTLIAMDLGELCEDTMTYKCPRITERQPDDVDCWCNATDTWVTYGTCSQTGEHRRDKRSVALAPHVGLGLETRTETWMSSEGAWKQIQKVETWALRHPGFTVIGLFLAHAIGTSITQKGIIFILLMLVTPSMAMRCVGIGNRDFVEGLSGATWVDVVLEHGSCVTTMAKNKPTLDIELLKTEVTNPAVLRKLCIEAKISNTTTDSRCPTQGEATLVEEQDANFVCRRTFVDRGWGNGCGLFGKGSFLTCAKFKCVTKLEGKIVQYENLKYSVIVTVHTGDQHQVGNETTEHGTIATITPQAPTSEIQLTDYGALTLDCSPRTGLDFNRVVLLTMKKKSWLVHKQWFLDLPLPWTSGASTSQETWNRQDLLVTFKTAHAKKQEVVVLGSQEGAMHTALTGATEIQTSGTTTIFAGHLKCRLKMDKLTLKGMSYVMCTGSFKLEKEVAETQHGTVLVQVKYEGTDAPCKIPFSSQDEKGVTQNGRLITANPIVIDKEKPVNIEAEPPFGESYIVVGSGEKALKLSWFKKGSSIGKMFEATARGARRMAILGDTAWDFGSIGGVFTSVGKLIHQIFGTAYGILFSGVSWTMKIGIGILLTWLGLNSRSTSLSMTCIAVGMVTLYLGVMVQADSGCVINWKGKELKCG.

Residues 1 to 15 (MNNQRKKTGRPSFNM) are interaction with host EXOC1. Over 1–101 (MNNQRKKTGR…LNIMNRRKRS (101 aa)) the chain is Cytoplasmic. The segment at 37-72 (LLSGQGPMKLVMAFIAFLRFLAIPPTAGILARWSSF) is hydrophobic; homodimerization of capsid protein C. Residues 101 to 114 (SVTMLLMLLPTALA) constitute a propeptide, ER anchor for the capsid protein C, removed in mature form by serine protease NS3. A helical transmembrane segment spans residues 102–119 (VTMLLMLLPTALAFHLTT). Over 120–242 (RGGEPTLIVS…QIQKVETWAL (123 aa)) the chain is Extracellular. Asparagine 183 is a glycosylation site (N-linked (GlcNAc...) asparagine; by host). Residues 243-260 (RHPGFTVIGLFLAHAIGT) form a helical membrane-spanning segment. Position 261 (serine 261) is a topological domain, cytoplasmic. Residues 262–280 (ITQKGIIFILLMLVTPSMA) form a helical membrane-spanning segment. The Extracellular segment spans residues 281-725 (MRCVGIGNRD…IHQIFGTAYG (445 aa)). Cystine bridges form between cysteine 283-cysteine 310, cysteine 340-cysteine 401, cysteine 354-cysteine 385, and cysteine 372-cysteine 396. Asparagine 347 is a glycosylation site (N-linked (GlcNAc...) asparagine; by host). The fusion peptide stretch occupies residues 378–391 (DRGWGNGCGLFGKG). A glycan (N-linked (GlcNAc...) asparagine; by host) is linked at asparagine 433. Cystine bridges form between cysteine 465–cysteine 565 and cysteine 582–cysteine 613. A helical membrane pass occupies residues 726–746 (ILFSGVSWTMKIGIGILLTWL). Residues 747–752 (GLNSRS) are Cytoplasmic-facing. The helical transmembrane segment at 753–775 (TSLSMTCIAVGMVTLYLGVMVQA) threads the bilayer. Topologically, residues 776–791 (DSGCVINWKGKELKCG) are extracellular. Cysteine 779 and cysteine 790 are disulfide-bonded.

As to quaternary structure, homodimer. Interacts (via N-terminus) with host EXOC1 (via C-terminus); this interaction results in EXOC1 degradation through the proteasome degradation pathway. In terms of assembly, forms heterodimers with envelope protein E in the endoplasmic reticulum and Golgi. Homodimer; in the endoplasmic reticulum and Golgi. Interacts with protein prM. Interacts with non-structural protein 1. As to quaternary structure, homodimer; Homohexamer when secreted. Interacts with envelope protein E. Specific enzymatic cleavages in vivo yield mature proteins. Cleavages in the lumen of endoplasmic reticulum are performed by host signal peptidase, wereas cleavages in the cytoplasmic side are performed by serine protease NS3. Signal cleavage at the 2K-4B site requires a prior NS3 protease-mediated cleavage at the 4A-2K site. Post-translationally, N-glycosylated. In terms of processing, N-glycosylated. The excreted form is glycosylated and this is required for efficient secretion of the protein from infected cells.

Its subcellular location is the virion. The protein resides in the host nucleus. The protein localises to the host cytoplasm. It is found in the host perinuclear region. It localises to the secreted. Its subcellular location is the virion membrane. The protein resides in the host endoplasmic reticulum membrane. In terms of biological role, plays a role in virus budding by binding to the cell membrane and gathering the viral RNA into a nucleocapsid that forms the core of a mature virus particle. During virus entry, may induce genome penetration into the host cytoplasm after hemifusion induced by the surface proteins. Can migrate to the cell nucleus where it modulates host functions. Overcomes the anti-viral effects of host EXOC1 by sequestering and degrading the latter through the proteasome degradation pathway. Inhibits RNA silencing by interfering with host Dicer. Functionally, prevents premature fusion activity of envelope proteins in trans-Golgi by binding to envelope protein E at pH6.0. After virion release in extracellular space, gets dissociated from E dimers. Its function is as follows. Acts as a chaperone for envelope protein E during intracellular virion assembly by masking and inactivating envelope protein E fusion peptide. prM is the only viral peptide matured by host furin in the trans-Golgi network probably to avoid catastrophic activation of the viral fusion activity in acidic GolGi compartment prior to virion release. prM-E cleavage is inefficient, and many virions are only partially matured. These uncleaved prM would play a role in immune evasion. In terms of biological role, may play a role in virus budding. Exerts cytotoxic effects by activating a mitochondrial apoptotic pathway through M ectodomain. May display a viroporin activity. Binds to host cell surface receptor and mediates fusion between viral and cellular membranes. Envelope protein is synthesized in the endoplasmic reticulum in the form of heterodimer with protein prM. They play a role in virion budding in the ER, and the newly formed immature particle is covered with 60 spikes composed of heterodimer between precursor prM and envelope protein E. The virion is transported to the Golgi apparatus where the low pH causes dissociation of PrM-E heterodimers and formation of E homodimers. prM-E cleavage is inefficient, and many virions are only partially matured. These uncleaved prM would play a role in immune evasion. Functionally, involved in immune evasion, pathogenesis and viral replication. Once cleaved off the polyprotein, is targeted to three destinations: the viral replication cycle, the plasma membrane and the extracellular compartment. Essential for viral replication. Required for formation of the replication complex and recruitment of other non-structural proteins to the ER-derived membrane structures. Excreted as a hexameric lipoparticle that plays a role against host immune response. Antagonizing the complement function. Binds to the host macrophages and dendritic cells. Inhibits signal transduction originating from Toll-like receptor 3 (TLR3). Its function is as follows. Disrupts the host endothelial glycocalyx layer of host pulmonary microvascular endothelial cells, inducing degradation of sialic acid and shedding of heparan sulfate proteoglycans. NS1 induces expression of sialidases, heparanase, and activates cathepsin L, which activates heparanase via enzymatic cleavage. These effects are probably linked to the endothelial hyperpermeability observed in severe dengue disease. This chain is Genome polyprotein, found in Dengue virus type 1 (strain Jamaica/CV1636/1977) (DENV-1).